A 359-amino-acid polypeptide reads, in one-letter code: Large ribosomal subunit protein bL27m (359 aa).

The N-terminal 24 residues, 1–24, are a transit peptide targeting the mitochondrion; sequence MSFWKVATLWQMPLRPSILVQVRT. A disordered region spans residues 29-48; sequence AAGSRTSMKDSAGRRLGPKK. A compositionally biased stretch (basic and acidic residues) spans 35 to 48; the sequence is SMKDSAGRRLGPKK.

Belongs to the bacterial ribosomal protein bL27 family.

Its subcellular location is the mitochondrion. In terms of biological role, component of the large subunit of mitochondrial ribosome. The sequence is that of Large ribosomal subunit protein bL27m (MRPL2) from Eremothecium gossypii (strain ATCC 10895 / CBS 109.51 / FGSC 9923 / NRRL Y-1056) (Yeast).